Reading from the N-terminus, the 340-residue chain is Glycerol-3-phosphate dehydrogenase [NAD(P)+] (340 aa).

Positions 13, 14, and 108 each coordinate NADPH. Sn-glycerol 3-phosphate contacts are provided by lysine 108, glycine 137, and threonine 139. Residue alanine 141 coordinates NADPH. 5 residues coordinate sn-glycerol 3-phosphate: lysine 193, aspartate 246, serine 256, arginine 257, and asparagine 258. The active-site Proton acceptor is the lysine 193. Arginine 257 is a binding site for NADPH. The NADPH site is built by isoleucine 281 and glutamate 283.

This sequence belongs to the NAD-dependent glycerol-3-phosphate dehydrogenase family.

The protein resides in the cytoplasm. It catalyses the reaction sn-glycerol 3-phosphate + NAD(+) = dihydroxyacetone phosphate + NADH + H(+). The enzyme catalyses sn-glycerol 3-phosphate + NADP(+) = dihydroxyacetone phosphate + NADPH + H(+). The protein operates within membrane lipid metabolism; glycerophospholipid metabolism. Catalyzes the reduction of the glycolytic intermediate dihydroxyacetone phosphate (DHAP) to sn-glycerol 3-phosphate (G3P), the key precursor for phospholipid synthesis. This chain is Glycerol-3-phosphate dehydrogenase [NAD(P)+], found in Bartonella henselae (strain ATCC 49882 / DSM 28221 / CCUG 30454 / Houston 1) (Rochalimaea henselae).